A 116-amino-acid polypeptide reads, in one-letter code: Alpha-defensin 29 (116 aa).

A signal peptide spans 1 to 19 (MKTLVLLSALVLPCFQVQA). The propeptide occupies 20–60 (DPIQNTDEETKTEEQPEEEDQAVSVSFGGTEGSALQDVAQR). The tract at residues 22 to 44 (IQNTDEETKTEEQPEEEDQAVSV) is disordered. Tandem repeats lie at residues 65 to 67 (CRK), 68 to 70 (CRV), 71 to 73 (CQK), 74 to 76 (CQV), 77 to 79 (CQK), 80 to 82 (CPV), 83 to 85 (CPT), 86 to 88 (CPQ), and 89 to 91 (CPK). The tract at residues 65–70 (CRKCRV) is 2 X 3 AA tandem repeats of C-R-X. The tract at residues 71–79 (CQKCQVCQK) is 3 X 3 AA tandem repeats of C-Q-X. A 4 X 3 AA tandem repeats of C-P-X region spans residues 80 to 91 (CPVCPTCPQCPK).

It belongs to the alpha-defensin family. As to expression, small bowel.

The protein localises to the secreted. Functionally, apparent precursor of a secreted, cationic, proline- and cysteine-rich peptide that contains Cys-Pro-Xaa repeats. Unlike cryptdin, the proposed mature peptide region lacks the structural motif characteristic of defensins. The chain is Alpha-defensin 29 from Mus musculus (Mouse).